A 351-amino-acid polypeptide reads, in one-letter code: Neutral protease 2 homolog MGG_10927 (351 aa).

The signal sequence occupies residues 1-16; that stretch reads MKFSIGVSLLATLAGA. Positions 17–177 are excised as a propeptide; the sequence is VNVDMAKRDT…AAFLAKRTIV (161 aa). 2 disulfides stabilise this stretch: C181/C253 and C260/C278. H303 provides a ligand contact to Zn(2+). E304 is an active-site residue. H307 lines the Zn(2+) pocket.

This sequence belongs to the peptidase M35 family. Zn(2+) is required as a cofactor.

The protein resides in the secreted. The catalysed reaction is Preferential cleavage of bonds with hydrophobic residues in P1'. Also 3-Asn-|-Gln-4 and 8-Gly-|-Ser-9 bonds in insulin B chain.. Functionally, secreted metalloproteinase that allows assimilation of proteinaceous substrates. Shows high activities on basic nuclear substrates such as histone and protamine. This Colletotrichum graminicola (strain M1.001 / M2 / FGSC 10212) (Maize anthracnose fungus) protein is Neutral protease 2 homolog MGG_10927.